Consider the following 1000-residue polypeptide: MPGKLKVKIVAGRHLPVMDRASDLTDAFVEVKFGNTTFKTDVYLKSLNPQWNSEWFKFEVDDEDLQDEPLQITVLDHDTYSANDAIGKVYIDIDPLLYSEAATVISGWFPIYDTIHGIRGEINVVVKVDLFNDLNRFRQSSCGVKFFCTTAIPKCYRAVIIHGFVEELVVNEDPEYQWIDRIRTPRASNEARQRLISLMSGELQRKIGLKVLEMRGNAVVGYLQCFDLEGESGLVVRAIGTACTLDKLSSPAAFLPACNSPSKEMKEIPFNEDPNPNTHSSGPSTPLKNQTYSFSPSKSYSRQSSSSDTDLSLTPKTGMGSGSAGKEGGPFKALLRQQTQSALEQREFPFFTLTAFPPGFLVHVGGVVSAGSVKLLDRIHNPDEPETRDAWWAEIRQEIKSLAKALGCHAVVGYSESTSICEEVCILSASGTAAVLNPRFLQDGTVEGCLEQRLEENLPTRCGFCHIPYDELNMPFPAHLTYCYNCRKQKVPDVLFTTIDLPTDATVIGKGCLIQARLCRLKKKAQAEANATAISNLLPFIEYEVHTQLMNKLKLKGMNALFGLRIQITVGENMLMGLASATGVYLAALPTPGGIQIAGKTPNDGSYEQHISHMQKKINDTIAKNKELYEINPPEISEEIIGSPIPEPRQRSRLLRSQSESSDEVTELDLSHGKKDAFVLEIDDTDAMEDVHSLLTDVPPPSGFYSCNTEIMPGINNWTSEIQMFTSVRVIRLSSLNLTNQALNKNFNDLCENLLKSLYFKLRSMIPCCLCHVNFTVSLPEKEINQGTSTASPKNFDKKQALQTTKTPVEKSLQRASTDNEELLQFPLELCSDSFPSHPFPPAKAVTVERASPVGDGNFRNRSAPPCANSTVGVVKMTPLSFIPGAKITKYLGIINMFFIRETTSLREEGGVSGFLHAFIAEVFAMVRAHVAALGGNAVVSYIMKQCVFMENPNKNQAQCLINVSGDAVVFVRESDLEVVSSQQPTTNCQSSCTESEVTT.

Positions 1-109 (MPGKLKVKIV…EAATVISGWF (109 aa)) constitute a C2 domain. The Ca(2+) site is built by aspartate 19, aspartate 26, aspartate 76, aspartate 78, serine 81, and aspartate 84. Serine 197 is modified (phosphoserine; by PKB/AKT2). Phosphoserine occurs at positions 200 and 260. The interval 265-330 (MKEIPFNEDP…SGSAGKEGGP (66 aa)) is disordered. Residues 274-289 (PNPNTHSSGPSTPLKN) are compositionally biased toward polar residues. Positions 290 to 318 (QTYSFSPSKSYSRQSSSSDTDLSLTPKTG) are enriched in low complexity. A phosphoserine mark is found at serine 293, serine 295, serine 304, serine 305, and serine 306. Position 317 is a phosphothreonine (threonine 317). Gly residues predominate over residues 319–328 (MGSGSAGKEG). Residue serine 323 is modified to Phosphoserine. Position 601 is a phosphothreonine (threonine 601). The disordered stretch occupies residues 639 to 669 (EIIGSPIPEPRQRSRLLRSQSESSDEVTELD). A phosphoserine mark is found at serine 643, serine 657, serine 659, serine 661, and serine 662. Threonine 666 carries the phosphothreonine modification. Residue serine 671 is modified to Phosphoserine. At threonine 807 the chain carries Phosphothreonine. Phosphoserine is present on residues serine 817 and serine 852.

It depends on Ca(2+) as a cofactor. In terms of processing, phosphorylated on Ser-197 by active myristoylated kinase AKT2; insulin-stimulated phosphorylation by AKT2 regulates SLC2A4/GLUT4 translocation into the plasma membrane.

Its subcellular location is the cytoplasmic vesicle membrane. It is found in the cytoplasm. The protein resides in the cell cortex. The protein localises to the cell membrane. It localises to the cell projection. Its subcellular location is the ruffle. Its function is as follows. Required for insulin-stimulated glucose transport and glucose transporter SLC2A4/GLUT4 translocation from intracellular glucose storage vesicle (GSV) to the plasma membrane (PM) in adipocytes. Binds phospholipid membranes in a calcium-dependent manner and is necessary for the optimal membrane fusion between SLC2A4/GLUT4 GSV and the PM. This is C2 domain-containing protein 5 (C2CD5) from Pongo abelii (Sumatran orangutan).